Consider the following 226-residue polypeptide: Lipoprotein-releasing system ATP-binding protein LolD 1 (226 aa).

Residues 6-226 (LRLDKVTRSF…TLREGKVVAA (221 aa)) enclose the ABC transporter domain. 42-49 (GPSGAGKS) contacts ATP.

Belongs to the ABC transporter superfamily. Lipoprotein translocase (TC 3.A.1.125) family. As to quaternary structure, the complex is composed of two ATP-binding proteins (LolD) and two transmembrane proteins (LolC and LolE).

The protein localises to the cell inner membrane. Its function is as follows. Part of the ABC transporter complex LolCDE involved in the translocation of mature outer membrane-directed lipoproteins, from the inner membrane to the periplasmic chaperone, LolA. Responsible for the formation of the LolA-lipoprotein complex in an ATP-dependent manner. In Rhodospirillum rubrum (strain ATCC 11170 / ATH 1.1.1 / DSM 467 / LMG 4362 / NCIMB 8255 / S1), this protein is Lipoprotein-releasing system ATP-binding protein LolD 1.